We begin with the raw amino-acid sequence, 64 residues long: Carnocyclin-A (64 aa).

The propeptide occupies 1–4 (MLYE). Residues 5-64 (LVAYGIAQGTAEKVVSLINAGLTVGSIISILGGVTVGLSGVFTAVKAAIAKQGIKKAIQL) constitute a cross-link (cyclopeptide (Leu-Leu)).

Its subcellular location is the secreted. Functionally, cyclopeptide antibiotic that inhibits the growth of Gram-positive bacteria, but has no effect on the growth of Gram-negative bacteria. The polypeptide is Carnocyclin-A (Carnobacterium maltaromaticum (Carnobacterium piscicola)).